The primary structure comprises 251 residues: Hydroxyacylglutathione hydrolase (251 aa).

His-53, His-55, Asp-57, His-58, His-110, Asp-127, and His-165 together coordinate Zn(2+).

Belongs to the metallo-beta-lactamase superfamily. Glyoxalase II family. Monomer. The cofactor is Zn(2+).

It catalyses the reaction an S-(2-hydroxyacyl)glutathione + H2O = a 2-hydroxy carboxylate + glutathione + H(+). The protein operates within secondary metabolite metabolism; methylglyoxal degradation; (R)-lactate from methylglyoxal: step 2/2. Its function is as follows. Thiolesterase that catalyzes the hydrolysis of S-D-lactoyl-glutathione to form glutathione and D-lactic acid. The protein is Hydroxyacylglutathione hydrolase of Salmonella gallinarum (strain 287/91 / NCTC 13346).